The sequence spans 518 residues: Vesicular inhibitory amino acid transporter (518 aa).

The Cytoplasmic portion of the chain corresponds to 1 to 125 (MATLIRSKLS…WNVTNAIQGM (125 aa)). A helical membrane pass occupies residues 126 to 146 (FVLGLPYAILHGGYLGLFLII). Residues 147–197 (FAAVVCCYTGKILIACLYEENEDGETVRVRDSYVDIANACCAPRFPKLGGR) are Lumenal, vesicle-facing. A helical transmembrane segment spans residues 198–218 (VVNVAQIIELVMTCILYVVVS). The Cytoplasmic segment spans residues 219 to 258 (GNLMYNSFPNLPISQKSWSIMATAVLLPCAFLKNLKAVSK). Residues 259–279 (FSLLCTVAHFVINILVIAYCL) traverse the membrane as a helical segment. Residues 280–298 (SRARDWAWDKVKFYIDVKK) are Lumenal, vesicle-facing. A helical membrane pass occupies residues 299–319 (FPISIGIIVFSYTSQIFLPSL). At 320 to 334 (EGNMQSPREFHCMMN) the chain is on the cytoplasmic side. The chain crosses the membrane as a helical span at residues 335 to 355 (WTHIAACILKGLFALVAYLTW). Topologically, residues 356–376 (ADETKEVITDNLPSTIRAVVN) are lumenal, vesicle. Residues 377-397 (LFLVSKALLSYPLPFFAAVEV) traverse the membrane as a helical segment. At 398-431 (LEKSLFQEGARAFFPNCYGGDGRLKSWGLTLRCA) the chain is on the cytoplasmic side. Residues 432-452 (LVVFTLLMAIYVPHFALLMGL) traverse the membrane as a helical segment. Topologically, residues 453–454 (TG) are lumenal, vesicle. A helical transmembrane segment spans residues 455–475 (SLTGAGLCFLLPSLFHLKLMW). Residues 476-482 (RQLLWHQ) lie on the Cytoplasmic side of the membrane. A helical membrane pass occupies residues 483 to 503 (VFFDVSIFVIGSICSVSGFVH). The Lumenal, vesicle portion of the chain corresponds to 504 to 518 (SLEGLIEAYAYNIED).

It belongs to the amino acid/polyamine transporter 2 family. In terms of tissue distribution, initially expressed in late neurula stages in the anterior spinal cord. By early tailbud stages, expression extends posteriorly along the entire developing spinal cord and appears in the hindbrain. In late tailbud embryos, expressed in the forebrain, midbrain, hindbrain, spinal cord and retina. In swimming tadpoles, expressed in an extended and more intense pattern including interneurons.

It localises to the cytoplasmic vesicle membrane. The protein localises to the presynapse. The enzyme catalyses 4-aminobutanoate(out) + n H(+)(in) = 4-aminobutanoate(in) + n H(+)(out). It carries out the reaction glycine(out) + n H(+)(in) = glycine(in) + n H(+)(out). It catalyses the reaction beta-alanine(out) + n H(+)(in) = beta-alanine(in) + n H(+)(out). In terms of biological role, antiporter that exchanges vesicular protons for cytosolic 4-aminobutanoate or to a lesser extend glycine, thus allowing their secretion from nerve terminals. The transport is equally dependent on the chemical and electrical components of the proton gradient. May also transport beta-alanine. Acidification of GABAergic synaptic vesicles is a prerequisite for 4-aminobutanoate uptake. This chain is Vesicular inhibitory amino acid transporter, found in Xenopus laevis (African clawed frog).